Consider the following 759-residue polypeptide: Protein zyg-11 homolog A (759 aa).

LRR repeat units follow at residues 204 to 227 (LPRL…LTCK), 235 to 260 (MHYL…CLLH), and 490 to 513 (VTSI…FMAV).

It belongs to the zyg-11 family.

In terms of biological role, probably acts as a target recruitment subunit in an E3 ubiquitin ligase complex ZYGA-CUL2-elongin BC. This chain is Protein zyg-11 homolog A (ZYG11A), found in Homo sapiens (Human).